The following is a 237-amino-acid chain: MTLRTINAKDAASLDRDLMNEGGFSLDQLMELAGLSVSQAVYRVHPPSKGRNVLVACGPGNNGGDGLVAARHLAHYGYKPTVYYPKQGKNELYERLKTQLHNLSVPFTSDFLGSLQTSDLVIDAIFGFSFSGPLRDPFPKVISLMEETQVPVLSVDAPSSWDIEAGPPKEGPGAKFMPQTLISLTAAKPLVKWFKGRHFLGGRFLTKGVVERYGLDIPEYPGVEQIVEVDVNGEGKL.

The YjeF N-terminal domain occupies 11-223 (AASLDRDLMN…GLDIPEYPGV (213 aa)). (6S)-NADPHX is bound at residue 61–65 (NNGGD). K(+) contacts are provided by Asn62 and Asp123. (6S)-NADPHX contacts are provided by residues 127 to 133 (GFSFSGP) and Asp156. Ser159 lines the K(+) pocket.

Belongs to the NnrE/AIBP family. It depends on K(+) as a cofactor.

The protein localises to the cytoplasm. It is found in the mitochondrion. It carries out the reaction (6R)-NADHX = (6S)-NADHX. The enzyme catalyses (6R)-NADPHX = (6S)-NADPHX. Its function is as follows. Catalyzes the epimerization of the S- and R-forms of NAD(P)HX, a damaged form of NAD(P)H that is a result of enzymatic or heat-dependent hydration. This is a prerequisite for the S-specific NAD(P)H-hydrate dehydratase to allow the repair of both epimers of NAD(P)HX. This Ajellomyces capsulatus (strain G186AR / H82 / ATCC MYA-2454 / RMSCC 2432) (Darling's disease fungus) protein is NAD(P)H-hydrate epimerase.